Here is a 127-residue protein sequence, read N- to C-terminus: Aspartate 1-decarboxylase (127 aa).

Ser25 serves as the catalytic Schiff-base intermediate with substrate; via pyruvic acid. Ser25 bears the Pyruvic acid (Ser) mark. Thr57 is a substrate binding site. Catalysis depends on Tyr58, which acts as the Proton donor. 73–75 contacts substrate; that stretch reads GAA.

This sequence belongs to the PanD family. As to quaternary structure, heterooctamer of four alpha and four beta subunits. Pyruvate serves as cofactor. Is synthesized initially as an inactive proenzyme, which is activated by self-cleavage at a specific serine bond to produce a beta-subunit with a hydroxyl group at its C-terminus and an alpha-subunit with a pyruvoyl group at its N-terminus.

Its subcellular location is the cytoplasm. The catalysed reaction is L-aspartate + H(+) = beta-alanine + CO2. Its pathway is cofactor biosynthesis; (R)-pantothenate biosynthesis; beta-alanine from L-aspartate: step 1/1. In terms of biological role, catalyzes the pyruvoyl-dependent decarboxylation of aspartate to produce beta-alanine. The chain is Aspartate 1-decarboxylase from Bacillus velezensis (strain DSM 23117 / BGSC 10A6 / LMG 26770 / FZB42) (Bacillus amyloliquefaciens subsp. plantarum).